The following is a 159-amino-acid chain: Small ribosomal subunit protein uS4 (159 aa).

Residues 106–158 (RRLQTIVYRKGLAKSIYHARQLVVHGHVAVAGRRVTSPGFLVPRDLEDKITLI) form the S4 RNA-binding domain.

The protein belongs to the universal ribosomal protein uS4 family. As to quaternary structure, part of the 30S ribosomal subunit. Contacts protein S5. The interaction surface between S4 and S5 is involved in control of translational fidelity.

Its function is as follows. One of the primary rRNA binding proteins, it binds directly to 16S rRNA where it nucleates assembly of the body of the 30S subunit. In terms of biological role, with S5 and S12 plays an important role in translational accuracy. This is Small ribosomal subunit protein uS4 from Pyrobaculum islandicum (strain DSM 4184 / JCM 9189 / GEO3).